Reading from the N-terminus, the 98-residue chain is uncharacterized protein (98 aa).

This is an uncharacterized protein from Enterobacteria phage T4 (Bacteriophage T4).